The sequence spans 401 residues: Protein-glutamate methylesterase/protein-glutamine glutaminase (401 aa).

One can recognise a Response regulatory domain in the interval 16–134 (RVLVIDDSAV…LAGAEEFRRD (119 aa)). Position 67 is a 4-aspartylphosphate (aspartate 67). The disordered stretch occupies residues 146-208 (PIPPVPTQRD…PQGRGTPRNT (63 aa)). Composition is skewed to low complexity over residues 166–176 (AAPGAPVARSI) and 185–199 (SAPA…AQPP). The CheB-type methylesterase domain occupies 205 to 400 (PRNTARPEII…PGIVRRAKGG (196 aa)). Active-site residues include serine 219, histidine 246, and aspartate 342.

This sequence belongs to the CheB family. Post-translationally, phosphorylated by CheA. Phosphorylation of the N-terminal regulatory domain activates the methylesterase activity.

Its subcellular location is the cytoplasm. The catalysed reaction is [protein]-L-glutamate 5-O-methyl ester + H2O = L-glutamyl-[protein] + methanol + H(+). It catalyses the reaction L-glutaminyl-[protein] + H2O = L-glutamyl-[protein] + NH4(+). Its function is as follows. Involved in chemotaxis. Part of a chemotaxis signal transduction system that modulates chemotaxis in response to various stimuli. Catalyzes the demethylation of specific methylglutamate residues introduced into the chemoreceptors (methyl-accepting chemotaxis proteins or MCP) by CheR. Also mediates the irreversible deamidation of specific glutamine residues to glutamic acid. The sequence is that of Protein-glutamate methylesterase/protein-glutamine glutaminase from Maricaulis maris (strain MCS10) (Caulobacter maris).